Consider the following 568-residue polypeptide: Urease subunit alpha (568 aa).

In terms of domain architecture, Urease spans 131–568 (GGMDAHIHFI…LPLAQRYFLY (438 aa)). Residues histidine 136, histidine 138, and lysine 219 each contribute to the Ni(2+) site. Position 219 is an N6-carboxylysine (lysine 219). Histidine 221 is a substrate binding site. 2 residues coordinate Ni(2+): histidine 248 and histidine 274. The active-site Proton donor is histidine 322. A Ni(2+)-binding site is contributed by aspartate 362.

This sequence belongs to the metallo-dependent hydrolases superfamily. Urease alpha subunit family. In terms of assembly, heterotrimer of UreA (gamma), UreB (beta) and UreC (alpha) subunits. Three heterotrimers associate to form the active enzyme. It depends on Ni cation as a cofactor. Carboxylation allows a single lysine to coordinate two nickel ions.

It is found in the cytoplasm. The enzyme catalyses urea + 2 H2O + H(+) = hydrogencarbonate + 2 NH4(+). It functions in the pathway nitrogen metabolism; urea degradation; CO(2) and NH(3) from urea (urease route): step 1/1. The protein is Urease subunit alpha of Cereibacter sphaeroides (strain KD131 / KCTC 12085) (Rhodobacter sphaeroides).